The primary structure comprises 152 residues: Ferredoxin-thioredoxin reductase catalytic chain, chloroplastic (152 aa).

A chloroplast-targeting transit peptide spans M1–G38. C91 serves as a coordination point for [4Fe-4S] cluster. The active-site Nucleophile is the C93. A disulfide bridge connects residues C93 and C123. 3 residues coordinate [4Fe-4S] cluster: C110, C112, and C121.

The protein belongs to the ferredoxin thioredoxin reductase beta subunit family. Heterodimer of subunit A (variable subunit) and subunit B (catalytic subunit). Heterodimeric FTR forms a complex with ferredoxin and thioredoxin. [4Fe-4S] cluster serves as cofactor.

It is found in the plastid. The protein resides in the chloroplast. The enzyme catalyses [thioredoxin]-disulfide + 2 reduced [2Fe-2S]-[ferredoxin] + 2 H(+) = [thioredoxin]-dithiol + 2 oxidized [2Fe-2S]-[ferredoxin]. Catalytic subunit of the ferredoxin-thioredoxin reductase (FTR), which catalyzes the two-electron reduction of thioredoxins by the electrons provided by reduced ferredoxin. The polypeptide is Ferredoxin-thioredoxin reductase catalytic chain, chloroplastic (FTRC) (Zea mays (Maize)).